Here is a 156-residue protein sequence, read N- to C-terminus: MGRFIFLSSGLLVVFLSLSGADFECPSEWRPFDQHCYRAFDEPKRSADAEKFCSEQGNSGHLVSIQSKEEADFVAQLISDNIKSSPDYVWMGLWNQRREQYCSRKWTDGSNVIYKNVAERFTKNCFGLEKETEYRTWLNILCGDDYPFVCKFPPRC.

An N-terminal signal peptide occupies residues 1-21; it reads MGRFIFLSSGLLVVFLSLSGA. Cystine bridges form between C25/C36, C53/C150, and C125/C142. The C-type lectin domain maps to 32–151; sequence FDQHCYRAFD…CGDDYPFVCK (120 aa).

Belongs to the snaclec family. As to quaternary structure, heterodimer; disulfide-linked. Expressed by the venom gland.

It localises to the secreted. Functionally, interferes with one step of hemostasis (modulation of platelet aggregation, or coagulation cascade, for example). The chain is Snaclec 2 from Bitis gabonica (Gaboon adder).